A 509-amino-acid polypeptide reads, in one-letter code: Tyrosine-protein phosphatase non-receptor type substrate 1 (509 aa).

A signal peptide spans Met-1 to Gly-31. The 107-residue stretch at Lys-32–Ser-138 folds into the Ig-like V-type domain. Residues Lys-32–Asn-373 lie on the Extracellular side of the membrane. 13 N-linked (GlcNAc...) asparagine glycosylation sites follow: Asn-54, Asn-93, Asn-169, Asn-181, Asn-205, Asn-209, Asn-242, Asn-246, Asn-271, Asn-293, Asn-312, Asn-320, and Asn-345. Cys-55 and Cys-122 are oxidised to a cystine. 2 Ig-like C1-type domains span residues Pro-150–Ser-248 and Pro-255–Arg-349. Cys-172 and Cys-229 form a disulfide bridge. The cysteines at positions 274 and 332 are disulfide-linked. Residues Val-374–Tyr-394 traverse the membrane as a helical segment. Over Leu-395–Lys-509 the chain is Cytoplasmic. At Tyr-436 the chain carries Phosphotyrosine; by Tyr-kinases. The short motif at Tyr-436–Leu-439 is the SH2-binding element. Residues Leu-441–Glu-472 form a disordered region. The SH3-binding signature appears at Lys-446–Val-451. Phosphotyrosine; by Tyr-kinases is present on residues Tyr-460, Tyr-477, and Tyr-501. 3 consecutive short sequence motifs (SH2-binding) follow at residues Tyr-460–Ile-463, Tyr-477–Leu-480, and Tyr-501–Val-504. A disordered region spans residues Leu-485–Lys-509. The segment covering Glu-500 to Lys-509 has biased composition (polar residues).

In terms of assembly, binds PTPN11 when tyrosine-phosphorylated, except in macrophages, where it primarily binds PTPN6. Binds GRB2 in vitro. Binds FGR. Binds JAK2 irrespective of its phosphorylation status and forms a stable complex. Binds SCAP1 and/or SCAP2. The resulting complex recruits FYB1. Binds PTK2B. Interacts with TRIM2. In terms of processing, N-glycosylated. Post-translationally, phosphorylated on tyrosine residues in response to insulin, cell adhesion or epidermal growth factors. Dephosphorylated by PTPN11. Highly expressed in brain, spleen, lung, liver and kidney. Detected at lower levels in heart. Highly expressed in alveolar and peritoneal macrophages, and at lower levels in dendritic cells.

It localises to the membrane. In terms of biological role, immunoglobulin-like cell surface receptor for CD47. Acts as docking protein and induces translocation of PTPN6, PTPN11 and other binding partners from the cytosol to the plasma membrane. Supports adhesion of cerebellar neurons, neurite outgrowth and glial cell attachment. May play a key role in intracellular signaling during synaptogenesis and in synaptic function. Involved in the negative regulation of receptor tyrosine kinase-coupled cellular responses induced by cell adhesion, growth factors or insulin. Mediates negative regulation of phagocytosis, mast cell activation and dendritic cell activation. CD47 binding prevents maturation of immature dendritic cells and inhibits cytokine production by mature dendritic cells. Plays a role in antiviral immunity and limits new world arenavirus infection by decreasing virus internalization. Receptor for THBS1. Interaction with THBS1 stimulates phosphorylation of SIRPA. In response to THBS1, involved in ROS signaling in non-phagocytic cells, stimulating NADPH oxidase-derived ROS production. In Rattus norvegicus (Rat), this protein is Tyrosine-protein phosphatase non-receptor type substrate 1 (Sirpa).